The sequence spans 483 residues: Succinate semialdehyde dehydrogenase (483 aa).

NAD(+)-binding positions include 156-157 (WN), 180-183 (KPAP), and 233-234 (GS). The Proton acceptor role is filled by Glu255. Leu256 contacts NAD(+). Cys289 acts as the Nucleophile in catalysis. Residue Glu386 coordinates NAD(+).

The protein belongs to the aldehyde dehydrogenase family. In terms of assembly, homotetramer.

The catalysed reaction is succinate semialdehyde + NAD(+) + H2O = succinate + NADH + 2 H(+). Its function is as follows. Involved in the degradation of the pyridine ring of trigonelline (TG; N-methylnicotinate) into succinate and methylamine as carbon and nitrogen sources, respectively. Catalyzes the NAD(+)-dependent oxidation of succinate semialdehyde to succinate. This chain is Succinate semialdehyde dehydrogenase, found in Acinetobacter baylyi (strain ATCC 33305 / BD413 / ADP1).